The following is a 347-amino-acid chain: Elongation factor Ts (347 aa).

Residues 80-83 (TDFV) form an involved in Mg(2+) ion dislocation from EF-Tu region.

The protein belongs to the EF-Ts family.

The protein localises to the cytoplasm. In terms of biological role, associates with the EF-Tu.GDP complex and induces the exchange of GDP to GTP. It remains bound to the aminoacyl-tRNA.EF-Tu.GTP complex up to the GTP hydrolysis stage on the ribosome. The polypeptide is Elongation factor Ts (Streptococcus sanguinis (strain SK36)).